Here is a 110-residue protein sequence, read N- to C-terminus: Iron-sulfur cluster assembly protein CyaY (110 aa).

The protein belongs to the frataxin family.

Its function is as follows. Involved in iron-sulfur (Fe-S) cluster assembly. May act as a regulator of Fe-S biogenesis. In Pseudomonas putida (strain W619), this protein is Iron-sulfur cluster assembly protein CyaY.